Reading from the N-terminus, the 300-residue chain is MLDSLLALGGLVLLRDSVEWEGRSLLKALVKKSALCGEQVHILGCEVSEEEFREGFDSDINNRLVYHDFFRDPLNWSKTEEAFPGGPLGALRAMCKRTDPVPVTIALDSLSWLLLRLPCTTLCQVLHAVSHQDSCPGDSSSVGKVSVLGLLHEELHGPGPVGALSSLAQTEVTLGGTMGQASAHILCRRPRQRPTDQTQWFSILPDFSLDLQEGPSVESQPYSDPHIPPVDPTTHLTFNLHLSKKEREARDSLILPFQFSSEKQQALLRPRPGQATSHIFYEPDAYDDLDQEDPDDDLDI.

S252 carries the post-translational modification Phosphoserine. The segment at Q264 to I300 is disordered. Over residues D284–I300 the composition is skewed to acidic residues.

Belongs to the ELP5 family. As to quaternary structure, component of the elongator complex which consists of ELP1, ELP2, ELP3, ELP4, ELP5 and ELP6; in the complex, is required for optimal binding of ELP3 to ELP4. Post-translationally, tyrosine-phosphorylated. As to expression, ubiquitously expressed with high levels in heart, brain, liver, skeletal muscle and testis.

The protein resides in the nucleus. It is found in the cytoplasm. It participates in tRNA modification; 5-methoxycarbonylmethyl-2-thiouridine-tRNA biosynthesis. Component of the elongator complex which is required for multiple tRNA modifications, including mcm5U (5-methoxycarbonylmethyl uridine), mcm5s2U (5-methoxycarbonylmethyl-2-thiouridine), and ncm5U (5-carbamoylmethyl uridine). The elongator complex catalyzes formation of carboxymethyluridine in the wobble base at position 34 in tRNAs. Involved in cell migration. The protein is Elongator complex protein 5 of Homo sapiens (Human).